The following is an 858-amino-acid chain: Protein 4.1 (858 aa).

The tract at residues 1-125 (MTTEKSLAAE…KEIELGNSLD (125 aa)) is disordered. Ser-14 bears the Phosphoserine mark. Over residues 31–50 (QQETQLEEASQAAAAEGSDQ) the composition is skewed to low complexity. Phosphothreonine is present on Thr-62. Residues 63-77 (PTHEDLTKNKERTSE) are compositionally biased toward basic and acidic residues. A compositionally biased stretch (low complexity) spans 78–89 (SRGLSRLLSSFL). Phosphoserine occurs at positions 86, 87, 97, 106, 123, 151, 153, and 154. Residues 103–119 (EVESEKEKGEGGQKEIE) are compositionally biased toward basic and acidic residues. Residues 155–208 (IETQPAQEEHREDPDSETKEGEGIEECSGTEVKEDPESRAEREPEASQKPVRRH) are disordered. 2 stretches are compositionally biased toward basic and acidic residues: residues 161 to 176 (QEEHREDPDSETKEGE) and 185 to 200 (EVKEDPESRAEREPEA). Phosphoserine is present on Ser-192. In terms of domain architecture, FERM spans 211-492 (MHCKVSLLDD…EHHTFFRLTS (282 aa)). Tyr-223 carries the post-translational modification Phosphotyrosine. Residue Thr-379 is modified to Phosphothreonine. Residues 495–608 (TIPKSKFLAL…PAEPEPTEAW (114 aa)) are hydrophilic. Positions 518-636 (TRQASALIDR…TQKLAGKGED (119 aa)) are disordered. Phosphoserine occurs at positions 522, 541, 543, and 556. Basic and acidic residues-rich tracts occupy residues 581–595 (TPKEAVKVEEKRGEE) and 606–615 (EAWKVEKTHT). The interval 609–707 (KVEKTHTEVT…WDKRLSTHSP (99 aa)) is spectrin--actin-binding. Residues 616-629 (EVTVPTSNGDQTQK) are compositionally biased toward polar residues. Tyr-654 carries the phosphotyrosine modification. Phosphoserine is present on residues Ser-658, Ser-668, Ser-678, Ser-703, and Ser-706. Residues 710 to 858 (TLNINGQVPT…VHQETEISEE (149 aa)) form a C-terminal (CTD) region. Thr-730 and Thr-853 each carry phosphothreonine.

As to quaternary structure, binds with a high affinity to glycophorin and with lower affinity to band III protein. Associates with the nuclear mitotic apparatus. Binds calmodulin, CPAP and DLG1. Also found to associate with contractile apparatus and tight junctions. Interacts with NUMA1; this interaction is negatively regulated by CDK1 during metaphase and promotes anaphase-specific localization of NUMA1 in symmetrically dividing cells. Interacts with ATP2B1; regulates small intestinal calcium absorption through regulation of membrane expression of ATP2B1. In terms of processing, O-glycosylated; contains N-acetylglucosamine side chains in the C-terminal domain. Post-translationally, phosphorylated at multiple sites by different protein kinases and each phosphorylation event selectively modulates the protein's functions. Phosphorylation on Tyr-654 reduces the ability of 4.1 to promote the assembly of the spectrin/actin/4.1 ternary complex.

Its subcellular location is the nucleus. It is found in the cytoplasm. The protein resides in the cytoskeleton. It localises to the cell cortex. Functionally, protein 4.1 is a major structural element of the erythrocyte membrane skeleton. It plays a key role in regulating membrane physical properties of mechanical stability and deformability by stabilizing spectrin-actin interaction. Recruits DLG1 to membranes. Required for dynein-dynactin complex and NUMA1 recruitment at the mitotic cell cortex during anaphase. In Mus musculus (Mouse), this protein is Protein 4.1.